Here is a 317-residue protein sequence, read N- to C-terminus: UV DNA damage endonuclease (317 aa).

It belongs to the uve1/UvsE family.

Functionally, component in a DNA repair pathway. Removal of UV LIGHT damaged nucleotides. Recognizes pyrimidine dimers and cleave a phosphodiester bond immediately 5' to the lesion. This Bacillus cereus (strain Q1) protein is UV DNA damage endonuclease.